The sequence spans 539 residues: CTP synthase (539 aa).

The amidoligase domain stretch occupies residues 1-268 (MSFKCIFLTG…STFITEKLGL (268 aa)). Serine 14 serves as a coordination point for CTP. Serine 14 contacts UTP. Residue 15–20 (SLGKGL) participates in ATP binding. Tyrosine 55 contributes to the L-glutamine binding site. Position 72 (aspartate 72) interacts with ATP. Aspartate 72 and glutamate 142 together coordinate Mg(2+). Residues 149–151 (DIE), 188–193 (KTKPTQ), and lysine 224 contribute to the CTP site. UTP is bound by residues 188-193 (KTKPTQ) and lysine 224. The region spanning 294–533 (RIGLVGKYVQ…IQAAILYSRN (240 aa)) is the Glutamine amidotransferase type-1 domain. Position 353 (glycine 353) interacts with L-glutamine. Cysteine 380 functions as the Nucleophile; for glutamine hydrolysis in the catalytic mechanism. L-glutamine contacts are provided by residues 381-384 (LGMQ), glutamate 404, and arginine 461. Catalysis depends on residues histidine 506 and glutamate 508.

This sequence belongs to the CTP synthase family. As to quaternary structure, homotetramer.

The catalysed reaction is UTP + L-glutamine + ATP + H2O = CTP + L-glutamate + ADP + phosphate + 2 H(+). The enzyme catalyses L-glutamine + H2O = L-glutamate + NH4(+). It catalyses the reaction UTP + NH4(+) + ATP = CTP + ADP + phosphate + 2 H(+). It participates in pyrimidine metabolism; CTP biosynthesis via de novo pathway; CTP from UDP: step 2/2. Allosterically activated by GTP, when glutamine is the substrate; GTP has no effect on the reaction when ammonia is the substrate. The allosteric effector GTP functions by stabilizing the protein conformation that binds the tetrahedral intermediate(s) formed during glutamine hydrolysis. Inhibited by the product CTP, via allosteric rather than competitive inhibition. Functionally, catalyzes the ATP-dependent amination of UTP to CTP with either L-glutamine or ammonia as the source of nitrogen. Regulates intracellular CTP levels through interactions with the four ribonucleotide triphosphates. This Chlamydia felis (strain Fe/C-56) (Chlamydophila felis) protein is CTP synthase.